The chain runs to 506 residues: D-alanine--D-alanyl carrier protein ligase (506 aa).

Residue 152–153 (TS) coordinates ATP. Position 197 (aspartate 197) interacts with D-alanine. ATP is bound at residue 292-297 (NTYGPT). Valine 301 contacts D-alanine. ATP contacts are provided by residues aspartate 383, 395 to 398 (YRGR), and lysine 494. Lysine 494 provides a ligand contact to D-alanine.

The protein belongs to the ATP-dependent AMP-binding enzyme family. DltA subfamily.

The protein resides in the cytoplasm. The enzyme catalyses holo-[D-alanyl-carrier protein] + D-alanine + ATP = D-alanyl-[D-alanyl-carrier protein] + AMP + diphosphate. It participates in cell wall biogenesis; lipoteichoic acid biosynthesis. Functionally, catalyzes the first step in the D-alanylation of lipoteichoic acid (LTA), the activation of D-alanine and its transfer onto the D-alanyl carrier protein (Dcp) DltC. In an ATP-dependent two-step reaction, forms a high energy D-alanyl-AMP intermediate, followed by transfer of the D-alanyl residue as a thiol ester to the phosphopantheinyl prosthetic group of the Dcp. D-alanylation of LTA plays an important role in modulating the properties of the cell wall in Gram-positive bacteria, influencing the net charge of the cell wall. The protein is D-alanine--D-alanyl carrier protein ligase of Lacticaseibacillus rhamnosus (Lactobacillus rhamnosus).